The following is a 340-amino-acid chain: Gallate dioxygenase (340 aa).

His45 (proton donor) is an active-site residue. The Proton acceptor role is filled by His113.

It belongs to the LigB/MhpB extradiol dioxygenase family. Fe(2+) is required as a cofactor.

The enzyme catalyses 3,4,5-trihydroxybenzoate + O2 = (1E)-4-oxobut-1-ene-1,2,4-tricarboxylate + 2 H(+). In terms of biological role, ring-cleavage dioxygenase that acts specifically on gallate to produce the keto-tautomer of 4-oxalomesaconate. Mediates the first step of gallate degradation pathway. In Pseudomonas putida (strain ATCC 47054 / DSM 6125 / CFBP 8728 / NCIMB 11950 / KT2440), this protein is Gallate dioxygenase (galA).